The primary structure comprises 184 residues: Coordinator of PRMT5 and differentiation stimulator (184 aa).

An N-acetylmethionine modification is found at M1. A compositionally biased stretch (low complexity) spans 1-14 (MDLQAAGAQAQGAA). Residues 1–136 (MDLQAAGAQA…PYDADDIQES (136 aa)) form a disordered region. Residues 42–56 (SSQERETEKAMDRLA) are compositionally biased toward basic and acidic residues. Residues S66 and S75 each carry the phosphoserine modification. Acidic residues predominate over residues 78-89 (EGFAMDEEDSDG).

Interacts with PRMT5. Interacts with histone H4; specifically interacts with the N-terminus of histone H4 but not with histone H3. Interacts with CBFB. Found in a complex with PRMT5, RUNX1 and CBFB.

The protein resides in the nucleus. Its function is as follows. Histone-binding protein required for histone H4 methyltransferase activity of PRMT5. Specifically required for histone H4 'Arg-3' methylation mediated by PRMT5, but not histone H3 'Arg-8' methylation, suggesting that it modulates the substrate specificity of PRMT5. Specifically interacts with the N-terminus of histone H4 but not with histone H3, suggesting that it acts by promoting the association between histone H4 and PRMT5. Involved in CCNE1 promoter repression. Plays a role in muscle cell differentiation by modulating the recruitment of PRMT5 to the promoter of genes involved in the coordination between cell cycle exit and muscle differentiation. The sequence is that of Coordinator of PRMT5 and differentiation stimulator (COPRS) from Homo sapiens (Human).